A 1456-amino-acid chain; its full sequence is Macrophage mannose receptor 1 (1456 aa).

The first 18 residues, 1–18 (MRLPLLLVFASVIPGAVL), serve as a signal peptide directing secretion. Residues 19-1389 (LLDTRQFLIY…DPSKPSSNVA (1371 aa)) are Extracellular-facing. Residues 22-142 (TRQFLIYNED…SGLWSRWKIY (121 aa)) form the Ricin B-type lectin domain. Disulfide bonds link Cys35–Cys49 and Cys74–Cys91. N-linked (GlcNAc...) asparagine glycosylation is present at Asn104. The Fibronectin type-II domain maps to 163–211 (ANGATCAFPFKFENKWYADCTSAGRSDGWLWCGTTTDYDTDKLFGYCPL). Intrachain disulfides connect Cys168–Cys194, Cys182–Cys209, Cys247–Cys340, and Cys316–Cys332. The region spanning 225-341 (LTSVSYQINS…CVQKLGYICK (117 aa)) is the C-type lectin 1 domain. Asn344 carries an N-linked (GlcNAc...) asparagine glycan. C-type lectin domains lie at 369–487 (YAGH…YICK), 511–626 (HHFY…FVCK), 655–778 (RTSL…WICQ), and 807–923 (YKDY…FICQ). 2 disulfide bridges follow: Cys391-Cys486 and Cys463-Cys478. A glycan (N-linked (GlcNAc...) asparagine) is linked at Asn529. Disulfide bonds link Cys532–Cys625, Cys600–Cys617, Cys646–Cys659, Cys680–Cys777, Cys753–Cys769, Cys828–Cys922, and Cys899–Cys914. Asn926 and Asn930 each carry an N-linked (GlcNAc...) asparagine glycan. 3 consecutive C-type lectin domains span residues 952–1080 (YSNK…YICQ), 1102–1213 (YGKS…FLCK), and 1241–1356 (FHGH…YICK). Disulfide bonds link Cys977/Cys1079, Cys1052/Cys1071, Cys1123/Cys1212, Cys1190/Cys1204, Cys1263/Cys1355, and Cys1332/Cys1347. The N-linked (GlcNAc...) asparagine glycan is linked to Asn1160. Asn1205 carries an N-linked (GlcNAc...) asparagine glycan. A helical membrane pass occupies residues 1390–1410 (GVVIIVILLILTGAGLAAYFF). At 1411–1456 (YKKRRVHLPQEGAFENTLYFNSQSSPGTSDMKDLVGNIEQNEHSVI) the chain is on the cytoplasmic side.

In terms of assembly, (Microbial infection) Interacts with Dengue virus. (Microbial infection) May act as a receptor for hepatitis B virus, enabling uptake of the virus in hepatic dendritic cells.

The protein localises to the endosome membrane. The protein resides in the cell membrane. Its function is as follows. Mediates the endocytosis of glycoproteins by macrophages. Binds both sulfated and non-sulfated polysaccharide chains. In terms of biological role, (Microbial infection) Acts as a phagocytic receptor for bacteria, fungi and other pathogens. (Microbial infection) Acts as a receptor for Dengue virus envelope protein E. Functionally, (Microbial infection) Interacts with Hepatitis B virus envelope protein. This chain is Macrophage mannose receptor 1 (MRC1), found in Homo sapiens (Human).